A 307-amino-acid chain; its full sequence is Protease HtpX homolog (307 aa).

The next 2 membrane-spanning stretches (helical) occupy residues A7–A27 and S28–S48. H130 lines the Zn(2+) pocket. The active site involves E131. Residue H134 participates in Zn(2+) binding. 2 consecutive transmembrane segments (helical) span residues I145 to G165 and G171 to V191. Residue E200 participates in Zn(2+) binding. A disordered region spans residues A277–G307.

The protein belongs to the peptidase M48B family. It depends on Zn(2+) as a cofactor.

It is found in the cell inner membrane. The protein is Protease HtpX homolog of Nitrobacter winogradskyi (strain ATCC 25391 / DSM 10237 / CIP 104748 / NCIMB 11846 / Nb-255).